Consider the following 189-residue polypeptide: Interferon alpha-12 (189 aa).

The signal sequence occupies residues 1 to 23 (MARLCAFLMTLLVMSYWSTCSLG). Cystine bridges form between Cys-24–Cys-122 and Cys-52–Cys-162. A glycan (N-linked (GlcNAc...) asparagine) is linked at Asn-101.

It belongs to the alpha/beta interferon family.

It localises to the secreted. In terms of biological role, produced by macrophages, IFN-alpha have antiviral activities. Interferon stimulates the production of two enzymes: a protein kinase and an oligoadenylate synthetase. In Mus musculus (Mouse), this protein is Interferon alpha-12 (Ifna12).